A 357-amino-acid polypeptide reads, in one-letter code: Arginine kinase (357 aa).

Ala-2 bears the N-acetylalanine mark. The Phosphagen kinase N-terminal domain occupies 9–91 (KLEEGFKKLE…FDPIIEDYHK (83 aa)). Position 64–68 (64–68 (GVGVY)) interacts with L-arginine. The Phosphagen kinase C-terminal domain maps to 119–356 (FVISTRVRCG…LELIKIEKEM (238 aa)). ATP is bound by residues 122 to 126 (STRVR) and His-185. Residue Glu-225 coordinates L-arginine. Arg-229 contributes to the ATP binding site. L-arginine is bound at residue Cys-271. Residues 280–284 (RASVH) and 309–314 (RGTRGE) contribute to the ATP site. Glu-314 provides a ligand contact to L-arginine.

It belongs to the ATP:guanido phosphotransferase family.

It catalyses the reaction L-arginine + ATP = N(omega)-phospho-L-arginine + ADP + H(+). This is Arginine kinase from Carcinus maenas (Common shore crab).